A 124-amino-acid polypeptide reads, in one-letter code: Small ribosomal subunit protein uS12 (124 aa).

The segment at 1–32 is disordered; sequence MPTINQLVRKGRRDKTAKVKTAALKGSPQRRG. Residue Asp89 is modified to 3-methylthioaspartic acid. The tract at residues 104 to 124 is disordered; it reads TQGVKGRKQARSRYGAKKEKS. Basic residues predominate over residues 108–118; the sequence is KGRKQARSRYG.

Belongs to the universal ribosomal protein uS12 family. As to quaternary structure, part of the 30S ribosomal subunit. Contacts proteins S8 and S17. May interact with IF1 in the 30S initiation complex.

Its function is as follows. With S4 and S5 plays an important role in translational accuracy. In terms of biological role, interacts with and stabilizes bases of the 16S rRNA that are involved in tRNA selection in the A site and with the mRNA backbone. Located at the interface of the 30S and 50S subunits, it traverses the body of the 30S subunit contacting proteins on the other side and probably holding the rRNA structure together. The combined cluster of proteins S8, S12 and S17 appears to hold together the shoulder and platform of the 30S subunit. This chain is Small ribosomal subunit protein uS12, found in Rhodococcus erythropolis (strain PR4 / NBRC 100887).